We begin with the raw amino-acid sequence, 329 residues long: T-cell acute lymphocytic leukemia protein 1 homolog (329 aa).

3 disordered regions span residues 1 to 28 (MTER…RMAP), 40 to 78 (ETSR…KGRD), and 91 to 125 (TELC…SPPA). At serine 12 the chain carries Phosphoserine. Residues 58–70 (SGAGGGPASGGGA) show a composition bias toward gly residues. The segment covering 96 to 106 (PPGPAPAPAPA) has biased composition (pro residues). Residue serine 122 is modified to Phosphoserine; by MAPK. Serine 172 is subject to Phosphoserine. Positions 187–239 (VRRIFTNSRERWRQQNVNGAFAELRKLIPTHPPDKKLSKNEILRLAMKYINFL) constitute a bHLH domain. Residues 247-329 (EEEGTQRAKP…LPAADGAGPR (83 aa)) are disordered. Residues 263–273 (GAGGGGAGGGI) are compositionally biased toward gly residues. The segment covering 317–329 (PALLPAADGAGPR) has biased composition (low complexity).

In terms of assembly, efficient DNA binding requires dimerization with another bHLH protein. Forms heterodimers with TCF3. Binds to the LIM domain containing protein LMO2 and to DRG1. Can assemble in a complex with LDB1 and LMO2. Component of a TAL-1 complex composed at least of CBFA2T3, LDB1, TAL1 and TCF3. Interacts with SBNO2; this interaction inhibits TAL1 occupancy of the DCSTAMP promoter, leading to the activation of the DCSTAMP promoter by the transcription factor MITF. Phosphorylated on serine residues. Phosphorylation of Ser-122 by MAPK is strongly stimulated by hypoxia. In terms of processing, ubiquitinated; subsequent to hypoxia-dependent phosphorylation of Ser-122, ubiquitination targets the protein for rapid degradation via the ubiquitin system. This process may be characteristic for microvascular endothelial cells, since it could not be observed in large vessel endothelial cells. In terms of tissue distribution, erythroid and myeloid cells.

The protein localises to the nucleus. In terms of biological role, implicated in the genesis of hemopoietic malignancies. It may play an important role in hemopoietic differentiation. Serves as a positive regulator of erythroid differentiation. This Mus musculus (Mouse) protein is T-cell acute lymphocytic leukemia protein 1 homolog (Tal1).